The sequence spans 395 residues: uncharacterized protein (395 aa).

The disordered stretch occupies residues 115–144 (TKPPTEGGPEKDQSSPSQTQAAPQGPSTAS). The segment covering 128–141 (SSPSQTQAAPQGPS) has biased composition (low complexity).

This is an uncharacterized protein from Homo sapiens (Human).